Consider the following 323-residue polypeptide: MDKSNSSVVSEFVLLGLCSSQKLQLFYFCFFSVLYTVIVLGNLLIILTVTSDTSLHSPMYFLLGNLSFVDICQASFATPKMIADFLSAHETISFSGCIAQIFFIHLFTGGEMVLLVSMAYDRYVAICKPLYYVVIMSRRTCTVLVMISWAVSLVHTLSQLSFTVNLPFCGPNVVDSFFCDLPRVTKLACLDSYIIEILIVVNSGILSLSTFSLLVSSYIIILVTVWLKSSAAMAKAFSTLASHIAVVILFFGPCIFIYVWPFTISPLDKFLAIFYTVFTPVLNPIIYTLRNRDMKAAVRKIVNHYLRPRRISEMSLVVRTSFH.

Residues 1–25 (MDKSNSSVVSEFVLLGLCSSQKLQL) lie on the Extracellular side of the membrane. N-linked (GlcNAc...) asparagine glycosylation occurs at Asn5. The helical transmembrane segment at 26–49 (FYFCFFSVLYTVIVLGNLLIILTV) threads the bilayer. Residues 50–57 (TSDTSLHS) are Cytoplasmic-facing. Residues 58-79 (PMYFLLGNLSFVDICQASFATP) traverse the membrane as a helical segment. Topologically, residues 80–100 (KMIADFLSAHETISFSGCIAQ) are extracellular. Cysteines 97 and 189 form a disulfide. The chain crosses the membrane as a helical span at residues 101–120 (IFFIHLFTGGEMVLLVSMAY). The Cytoplasmic segment spans residues 121-139 (DRYVAICKPLYYVVIMSRR). A helical membrane pass occupies residues 140–158 (TCTVLVMISWAVSLVHTLS). The Extracellular segment spans residues 159-195 (QLSFTVNLPFCGPNVVDSFFCDLPRVTKLACLDSYII). A helical transmembrane segment spans residues 196–219 (EILIVVNSGILSLSTFSLLVSSYI). Residues 220 to 235 (IILVTVWLKSSAAMAK) lie on the Cytoplasmic side of the membrane. The chain crosses the membrane as a helical span at residues 236–258 (AFSTLASHIAVVILFFGPCIFIY). The Extracellular portion of the chain corresponds to 259 to 269 (VWPFTISPLDK). Residues 270 to 289 (FLAIFYTVFTPVLNPIIYTL) form a helical membrane-spanning segment. Residues 290–323 (RNRDMKAAVRKIVNHYLRPRRISEMSLVVRTSFH) are Cytoplasmic-facing.

Belongs to the G-protein coupled receptor 1 family.

It is found in the cell membrane. Functionally, odorant receptor. This Homo sapiens (Human) protein is Olfactory receptor 4K5 (OR4K5).